Consider the following 239-residue polypeptide: Glandular kallikrein, prostatic (239 aa).

One can recognise a Peptidase S1 domain in the interval 1 to 236 (VIGGQECARD…YREWIERTMA (236 aa)). Disulfide bonds link Cys-7-Cys-151, Cys-26-Cys-42, Cys-128-Cys-197, Cys-162-Cys-176, and Cys-187-Cys-212. His-41 serves as the catalytic Charge relay system. N-linked (GlcNAc...) asparagine glycosylation occurs at Asn-78. The active-site Charge relay system is Asp-96. Asn-169 is a glycosylation site (N-linked (GlcNAc...) asparagine). Ser-191 functions as the Charge relay system in the catalytic mechanism.

This sequence belongs to the peptidase S1 family. Kallikrein subfamily.

It carries out the reaction Preferential cleavage of Arg-|-Xaa bonds in small molecule substrates. Highly selective action to release kallidin (lysyl-bradykinin) from kininogen involves hydrolysis of Met-|-Xaa or Leu-|-Xaa.. In terms of biological role, glandular kallikreins cleave Met-Lys and Arg-Ser bonds in kininogen to release Lys-bradykinin. The polypeptide is Glandular kallikrein, prostatic (Cavia porcellus (Guinea pig)).